The following is a 263-amino-acid chain: METKLQLHGFNNLTKSLSFNIYDICYAQTEEQREAYIDYIDEMYNAERLTQILTDVVKIIGANVLNIARQDYEPHGASVTMLIAEHELSDSEANNEESPGPLPDTIVAHLDKSHVTVHTYPESHPHDGVSTFRADIDVSTCGLISPLKVLNYLIHSFDSDVVTVDYRVRGFTRDVDGTKHYIDHDINSIQNYLTEDTQNAYQMIDVNVYQENLFHTKMMLKEFNLDNYVFGVNAGDLDPAEAQSIEDRLRREMLEIFYSRNVE.

Serine 113 acts as the Schiff-base intermediate with substrate; via pyruvic acid in catalysis. Position 113 is a pyruvic acid (Ser); by autocatalysis (serine 113). Histidine 118 (proton acceptor; for processing activity) is an active-site residue. The active-site Proton donor; for catalytic activity is cysteine 141.

Belongs to the prokaryotic AdoMetDC family. Type 2 subfamily. As to quaternary structure, heterooctamer of four alpha and four beta chains arranged as a tetramer of alpha/beta heterodimers. Pyruvate serves as cofactor. Is synthesized initially as an inactive proenzyme. Formation of the active enzyme involves a self-maturation process in which the active site pyruvoyl group is generated from an internal serine residue via an autocatalytic post-translational modification. Two non-identical subunits are generated from the proenzyme in this reaction, and the pyruvate is formed at the N-terminus of the alpha chain, which is derived from the carboxyl end of the proenzyme. The post-translation cleavage follows an unusual pathway, termed non-hydrolytic serinolysis, in which the side chain hydroxyl group of the serine supplies its oxygen atom to form the C-terminus of the beta chain, while the remainder of the serine residue undergoes an oxidative deamination to produce ammonia and the pyruvoyl group blocking the N-terminus of the alpha chain.

The catalysed reaction is S-adenosyl-L-methionine + H(+) = S-adenosyl 3-(methylsulfanyl)propylamine + CO2. It participates in amine and polyamine biosynthesis; S-adenosylmethioninamine biosynthesis; S-adenosylmethioninamine from S-adenosyl-L-methionine: step 1/1. Its function is as follows. Catalyzes the decarboxylation of S-adenosylmethionine to S-adenosylmethioninamine (dcAdoMet), the propylamine donor required for the synthesis of the polyamines spermine and spermidine from the diamine putrescine. This chain is S-adenosylmethionine decarboxylase proenzyme, found in Marinobacter nauticus (strain ATCC 700491 / DSM 11845 / VT8) (Marinobacter aquaeolei).